Consider the following 215-residue polypeptide: Thiamine import ATP-binding protein ThiQ (215 aa).

The region spanning 2–215 (IYLNNVILND…GQISQLQKGV (214 aa)) is the ABC transporter domain. 32-39 (GESGAGKS) serves as a coordination point for ATP.

The protein belongs to the ABC transporter superfamily. Thiamine importer (TC 3.A.1.19.1) family. The complex is composed of two ATP-binding proteins (ThiQ), two transmembrane proteins (ThiP) and a solute-binding protein (ThiB).

The protein localises to the cell inner membrane. The enzyme catalyses thiamine(out) + ATP + H2O = thiamine(in) + ADP + phosphate + H(+). Its function is as follows. Part of the ABC transporter complex ThiBPQ involved in thiamine import. Responsible for energy coupling to the transport system. This is Thiamine import ATP-binding protein ThiQ from Haemophilus influenzae (strain 86-028NP).